The chain runs to 700 residues: Elongation factor G (700 aa).

The tr-type G domain occupies 8-290 (ERYRNIGISA…AVIDYLPSPV (283 aa)). GTP contacts are provided by residues 17–24 (AHIDAGKT), 88–92 (DTPGH), and 142–145 (NKMD).

It belongs to the TRAFAC class translation factor GTPase superfamily. Classic translation factor GTPase family. EF-G/EF-2 subfamily.

It localises to the cytoplasm. Catalyzes the GTP-dependent ribosomal translocation step during translation elongation. During this step, the ribosome changes from the pre-translocational (PRE) to the post-translocational (POST) state as the newly formed A-site-bound peptidyl-tRNA and P-site-bound deacylated tRNA move to the P and E sites, respectively. Catalyzes the coordinated movement of the two tRNA molecules, the mRNA and conformational changes in the ribosome. The chain is Elongation factor G from Leptothrix cholodnii (strain ATCC 51168 / LMG 8142 / SP-6) (Leptothrix discophora (strain SP-6)).